The sequence spans 776 residues: K(+) efflux antiporter 3, chloroplastic (776 aa).

Residues 1 to 72 constitute a chloroplast transit peptide; that stretch reads MAISTMLGSI…KVFLDTSKRF (72 aa). Topologically, residues 73–93 are lumenal, thylakoid; sequence YFQGRWSESSGRRVETYAGVD. A helical transmembrane segment spans residues 94–114; that stretch reads VASAVDVINDLGFDTLTFLMV. Thr-115 is a topological domain (stromal). The chain crosses the membrane as a helical span at residues 116–136; that stretch reads VIIVPAFRILKASPILGFFFA. The Lumenal, thylakoid segment spans residues 137–153; that stretch reads GVVLNQFGLIRNLTDVK. Residues 154–174 form a helical membrane-spanning segment; sequence VLSEWGILFLLFEMGLELSLA. At 175–181 the chain is on the stromal side; sequence RLKALAK. Residues 182–202 form a helical membrane-spanning segment; it reads FAFGMGLTQVLLCTAAFTAFE. The Lumenal, thylakoid segment spans residues 203–232; the sequence is LPPNGAIGTKILEFLFHSRPDLVNIRSIDE. A helical membrane pass occupies residues 233–253; sequence AVVIGAALSLSSSAFVLQLLA. Topologically, residues 254-266 are stromal; that stretch reads EKGELPTRFGSAT. A helical membrane pass occupies residues 267-287; the sequence is LGILLLQDIAVVPLLVILPVL. Residues 288–296 are Lumenal, thylakoid-facing; that stretch reads ESQDIGGES. The chain crosses the membrane as a helical span at residues 297–317; it reads IWPMLAKESAKALGGLGILSL. Topologically, residues 318–338 are stromal; sequence GGKFFLRRIFEVVAETRSSEA. A helical transmembrane segment spans residues 339–359; sequence FVALCLLTVAGTSLVTQWLGF. The Lumenal, thylakoid portion of the chain corresponds to 360–389; sequence SDTLGAFLAGALLAETNFRTQIEADIRPFR. The helical transmembrane segment at 390-410 threads the bilayer; that stretch reads GLLLGLFFVTTGTSIDMEVLF. The Stromal portion of the chain corresponds to 411 to 415; sequence REWPN. Residues 416–436 form a helical membrane-spanning segment; that stretch reads VLSLLGGLIVIKTLIITAIGP. Topologically, residues 437 to 445 are lumenal, thylakoid; that stretch reads RVGLTIQES. A helical membrane pass occupies residues 446-466; it reads VRVGFLLSQGGEFAFVVFSLA. Residues 467–468 are Stromal-facing; that stretch reads NR. A helical transmembrane segment spans residues 469-489; it reads LGVLPNELNKLLIIVVVLSMA. Over 490–526 the chain is Lumenal, thylakoid; it reads LTPYLNQLGRKAADFLDERLDPGEKIGEDVNFDVSES. Residues 524-649 enclose the RCK N-terminal domain; that stretch reads SESIVIIGFG…KKAGATDAIL (126 aa). A helical transmembrane segment spans residues 527 to 547; sequence IVIIGFGQMGQVLANFLSTPL. The Stromal segment spans residues 548–776; the sequence is VSDSDLVGWP…FVGKADKAQD (229 aa). The segment at 728 to 776 is disordered; sequence MQMKASDSNSDSAAEILQETAGLSQPPEIDDSSVNIDNGFVGKADKAQD.

The protein belongs to the monovalent cation:proton antiporter 2 (CPA2) transporter (TC 2.A.37) family. KEA (TC 2.A.37.1) subfamily. As to expression, expressed at low levels in flowers, siliques and leaves. In terms of tissue distribution, expressed at low levels in flowers and leaves. Most abundant splice form in all organs, including siliques, flowers, leaves and roots. Preferentially expressed in photosynthetically active tissues, including seedling cotyledons and mature leaves. As to expression, expressed in shoots and roots.

It is found in the plastid. It localises to the chloroplast membrane. The protein localises to the golgi apparatus membrane. The protein resides in the chloroplast thylakoid membrane. It carries out the reaction K(+)(in) + H(+)(out) = K(+)(out) + H(+)(in). With respect to regulation, regulated by a mechanism involving lumenal C-terminus region; a fine-tuned balance between photoprotective energy dissipation in high light and a maximum quantum yield in low light involves a reduced activity under high light. Its function is as follows. Electroneutral K(+)/H(+) efflux antiporter assuring proton efflux from the thylakoid lumen to the plastid stroma, thus increasing the membrane potential at the expense of the proton gradient (delta pH) component of the proton motive force (PMF). Promotes photosynthesis and growth in conditions where the chloroplast (cp)ATP synthase activity is low (e.g. cgl160 mutant background) by reducing the pH gradient across the thylakoid membrane. Accelerates photosynthetic acclimation in fluctuating light environments by modulating two components of the proton motive force, the proton gradient and the electric potential (delta Psi). Promotes the relaxation of photoprotective energy-dependent non-photochemical quenching (NPQ) after transitions from high to low light, thus enhancing photosystem II (PSII) quantum efficiency in fluctuating light. On transition from high to low light, slows down photoprotection by dissipating the pH gradient across the thylakoid membrane. During photosynthetic response on transition from dark to low light, involved in a sequential mechanism of adaptation; VCCN1 and CLCe first trigger the activation of photoprotection, which is later down-regulated by KEA3 to a low steady state, while adjusting electron transport. Together with the chloroplast NADH dehydrogenase-like (NDH) complex, maximizes photosynthesis efficiency after a long dark adaptation. Required in roots for rapid hyperosmotic-induced Ca(2+) responses and for osmo-sensory potentiation in hyperosmotic conditions. Functionally, low K(+)/H(+) efflux antiporter activity. In terms of biological role, low K(+)/H(+) efflux antiporter activity. Promotes non-photochemical quenching (NPQ) in high light conditions. This chain is K(+) efflux antiporter 3, chloroplastic, found in Arabidopsis thaliana (Mouse-ear cress).